The primary structure comprises 142 residues: Large ribosomal subunit protein uL13 (142 aa).

Belongs to the universal ribosomal protein uL13 family. As to quaternary structure, part of the 50S ribosomal subunit.

This protein is one of the early assembly proteins of the 50S ribosomal subunit, although it is not seen to bind rRNA by itself. It is important during the early stages of 50S assembly. The chain is Large ribosomal subunit protein uL13 from Buchnera aphidicola subsp. Schizaphis graminum (strain Sg).